The following is a 157-amino-acid chain: Small ribosomal subunit protein uS7 (157 aa).

It belongs to the universal ribosomal protein uS7 family. Part of the 30S ribosomal subunit. Contacts proteins S9 and S11.

Its function is as follows. One of the primary rRNA binding proteins, it binds directly to 16S rRNA where it nucleates assembly of the head domain of the 30S subunit. Is located at the subunit interface close to the decoding center, probably blocks exit of the E-site tRNA. This is Small ribosomal subunit protein uS7 from Borrelia hermsii (strain HS1 / DAH).